The following is a 505-amino-acid chain: Maturase K (505 aa).

This sequence belongs to the intron maturase 2 family. MatK subfamily.

Its subcellular location is the plastid. It is found in the chloroplast. Usually encoded in the trnK tRNA gene intron. Probably assists in splicing its own and other chloroplast group II introns. The chain is Maturase K from Allamanda cathartica (Yellow allamanda).